Here is a 258-residue protein sequence, read N- to C-terminus: Pimeloyl-[acyl-carrier protein] methyl ester esterase (258 aa).

Residues Val-17–His-241 form the AB hydrolase-1 domain. Substrate-binding positions include Trp-23, Ser-83 to Leu-84, and Phe-145 to Gln-149. Residue Ser-83 is the Nucleophile of the active site. Catalysis depends on residues Asp-207 and His-235. A substrate-binding site is contributed by His-235.

It belongs to the AB hydrolase superfamily. Carboxylesterase BioH family. In terms of assembly, monomer.

The protein resides in the cytoplasm. It catalyses the reaction 6-carboxyhexanoyl-[ACP] methyl ester + H2O = 6-carboxyhexanoyl-[ACP] + methanol + H(+). Its pathway is cofactor biosynthesis; biotin biosynthesis. Its function is as follows. The physiological role of BioH is to remove the methyl group introduced by BioC when the pimeloyl moiety is complete. It allows to synthesize pimeloyl-ACP via the fatty acid synthetic pathway through the hydrolysis of the ester bonds of pimeloyl-ACP esters. The sequence is that of Pimeloyl-[acyl-carrier protein] methyl ester esterase from Neisseria meningitidis serogroup B (strain ATCC BAA-335 / MC58).